A 255-amino-acid chain; its full sequence is MNILSPIIIIIILIVLFYVMRMYNYQNKEPNKEPNKENMKQLNFRNRNNSNHNFIPKPLKKITNRNCHKIRKNILNNKFQTSDSIDLDNVIDLIYSKFVVRVDDFNFANKPTTNRKFDKHNSNDKILMKNIISNINEWNILFQKYSIESVYIDDIHISNILETENECILTVRAILIHGSQKYHIEMNFYGVKDRYDDFFTTKACNYNVVLFSIEHISSRQYHEKSTIDNPFMTMEQQLEYVKYIEKIHQDEINDN.

The signal sequence occupies residues 1–22 (MNILSPIIIIIILIVLFYVMRM).

This is an uncharacterized protein from Acanthamoeba polyphaga (Amoeba).